Reading from the N-terminus, the 173-residue chain is Mesencephalic astrocyte-derived neurotrophic factor homolog (173 aa).

The signal sequence occupies residues 1-22 (MKTWYMVVVIGFLATLVQTSLA). 4 cysteine pairs are disulfide-bonded: Cys-28–Cys-114, Cys-31–Cys-103, Cys-61–Cys-72, and Cys-148–Cys-151.

It belongs to the ARMET family.

The protein resides in the secreted. Required during the maturation of the embryonic nervous system for maintenance of neuronal and cuticular connectivity. Essential for maintenance of dopaminergic neurons and dopamine levels. The polypeptide is Mesencephalic astrocyte-derived neurotrophic factor homolog (Drosophila yakuba (Fruit fly)).